The sequence spans 185 residues: UPF0200 protein Mevan_0592 (185 aa).

8-15 provides a ligand contact to ATP; that stretch reads GMPGSGKS.

The protein belongs to the UPF0200 family.

This is UPF0200 protein Mevan_0592 from Methanococcus vannielii (strain ATCC 35089 / DSM 1224 / JCM 13029 / OCM 148 / SB).